We begin with the raw amino-acid sequence, 474 residues long: PRAME family member 17 (474 aa).

The stretch at 97 to 124 (RWKLQVLDLRDVDGNFWTIWSGARALSC) is one LRR 1; degenerate repeat. An LRR 2; degenerate repeat occupies 179–203 (HLCCNKVQNYSMPTSSFRNLLKRVY). The LRR 3; degenerate repeat unit spans residues 204–230 (PDSIQELEIKRKCSLNKTGKFAPYLSQ). The LRR 4; degenerate repeat unit spans residues 231–265 (MSNLRKLFLAFGYDDELYVSGQQQFVPDLDCPFLC). LRR repeat units follow at residues 266-291 (LYYP…LRCL), 292-323 (KNPL…SQLK), 324-342 (ELHL…PLGA), 348-375 (AATL…ALSR), and 376-400 (CSQL…LLCH).

It belongs to the PRAME family.

The polypeptide is PRAME family member 17 (Homo sapiens (Human)).